The primary structure comprises 103 residues: Large ribosomal subunit protein eL14 (103 aa).

This sequence belongs to the eukaryotic ribosomal protein eL14 family.

This is Large ribosomal subunit protein eL14 from Pyrobaculum aerophilum (strain ATCC 51768 / DSM 7523 / JCM 9630 / CIP 104966 / NBRC 100827 / IM2).